The primary structure comprises 294 residues: uncharacterized protein (294 aa).

Disordered regions lie at residues 1-30 (MKRQRPQDSMISVPLQNENSTTTPTKEVSH), 51-86 (ALSDITPDTPPAFKTPYSSLPYNLVPQNSSTSKKRP), and 250-294 (DELN…STST). 3 stretches are compositionally biased toward polar residues: residues 7–26 (QDSMISVPLQNENSTTTPTK), 66–81 (PYSSLPYNLVPQNSST), and 255–277 (PMNNNDTPITNSTHSAQMSNLPT).

The protein localises to the nucleus. This is an uncharacterized protein from Schizosaccharomyces pombe (strain 972 / ATCC 24843) (Fission yeast).